Reading from the N-terminus, the 241-residue chain is tRNA pseudouridine synthase A (241 aa).

Asp-51 serves as the catalytic Nucleophile. Tyr-110 serves as a coordination point for substrate.

It belongs to the tRNA pseudouridine synthase TruA family. In terms of assembly, homodimer.

The catalysed reaction is uridine(38/39/40) in tRNA = pseudouridine(38/39/40) in tRNA. Formation of pseudouridine at positions 38, 39 and 40 in the anticodon stem and loop of transfer RNAs. This Campylobacter jejuni subsp. doylei (strain ATCC BAA-1458 / RM4099 / 269.97) protein is tRNA pseudouridine synthase A.